The following is a 406-amino-acid chain: Mitochondrial ribosome-associated GTPase 2 (406 aa).

Residues 15 to 406 are localized in the mitochondria; that stretch reads FEGVGHWALS…LGQGRQPLRW (392 aa). The tract at residues 30–406 is not localized in the mitochondria; that stretch reads KPSRLLPQQA…LGQGRQPLRW (377 aa). The 155-residue stretch at 70–224 folds into the Obg domain; that stretch reads RYFVDYRRVL…RVLHLELKTV (155 aa). Residues 225–390 enclose the OBG-type G domain; it reads AHAGMVGFPN…LLLHLKVLYD (166 aa). Residues 231 to 238, 256 to 260, 278 to 281, 345 to 348, and 371 to 373 contribute to the GTP site; these read GFPNAGKS, FTTLK, DIPG, NKID, and SAL. S238 and T258 together coordinate Mg(2+).

This sequence belongs to the TRAFAC class OBG-HflX-like GTPase superfamily. OBG GTPase family. Associates with the mitochondrial ribosome large subunit; the association occurs in a GTP-dependent manner. It depends on Mg(2+) as a cofactor.

Its subcellular location is the mitochondrion. It is found in the mitochondrion inner membrane. Functionally, plays a role in the regulation of the mitochondrial ribosome assembly and of translational activity. Displays GTPase activity. Involved in the ribosome maturation process. This is Mitochondrial ribosome-associated GTPase 2 (MTG2) from Pongo abelii (Sumatran orangutan).